A 231-amino-acid polypeptide reads, in one-letter code: Ribosomal RNA large subunit methyltransferase E (231 aa).

S-adenosyl-L-methionine is bound by residues glycine 76, tryptophan 78, aspartate 99, aspartate 115, and aspartate 139. The active-site Proton acceptor is lysine 179.

Belongs to the class I-like SAM-binding methyltransferase superfamily. RNA methyltransferase RlmE family.

The protein resides in the cytoplasm. The enzyme catalyses uridine(2552) in 23S rRNA + S-adenosyl-L-methionine = 2'-O-methyluridine(2552) in 23S rRNA + S-adenosyl-L-homocysteine + H(+). In terms of biological role, specifically methylates the uridine in position 2552 of 23S rRNA at the 2'-O position of the ribose in the fully assembled 50S ribosomal subunit. This chain is Ribosomal RNA large subunit methyltransferase E, found in Bradyrhizobium sp. (strain ORS 278).